The sequence spans 59 residues: Protein translocase subunit SecE (59 aa).

Residues 35-55 form a helical membrane-spanning segment; sequence IVAIGIAIIGVVGFIIVLIGE.

This sequence belongs to the SecE/SEC61-gamma family. As to quaternary structure, component of the Sec protein translocase complex. Heterotrimer consisting of SecY (alpha), SecG (beta) and SecE (gamma) subunits. The heterotrimers can form oligomers, although 1 heterotrimer is thought to be able to translocate proteins. Interacts with the ribosome. May interact with SecDF, and other proteins may be involved.

The protein localises to the cell membrane. Its function is as follows. Essential subunit of the Sec protein translocation channel SecYEG. Clamps together the 2 halves of SecY. May contact the channel plug during translocation. The polypeptide is Protein translocase subunit SecE (Methanobrevibacter smithii (strain ATCC 35061 / DSM 861 / OCM 144 / PS)).